A 181-amino-acid chain; its full sequence is MLRRPEKEQLVQELTSEFQNSSLVLFTDFKGLTVAQMTNLRRALREKLGSGARLTVVKNTLLKMALKNSGYDVDSHESSFFGPTAVLYVTEGDPVEAIKVFYNFVKENKGTPVCKGLFLERKFFAGEQLEDLSKLPSRDQLIAMVVGGIQAPIRGLVNSLAGVLRSVLYALNAIKEQKEKQ.

It belongs to the universal ribosomal protein uL10 family. Part of the ribosomal stalk of the 50S ribosomal subunit. The N-terminus interacts with L11 and the large rRNA to form the base of the stalk. The C-terminus forms an elongated spine to which L12 dimers bind in a sequential fashion forming a multimeric L10(L12)X complex.

Functionally, forms part of the ribosomal stalk, playing a central role in the interaction of the ribosome with GTP-bound translation factors. In Fervidobacterium nodosum (strain ATCC 35602 / DSM 5306 / Rt17-B1), this protein is Large ribosomal subunit protein uL10.